The primary structure comprises 361 residues: Phosphoserine aminotransferase (361 aa).

Arginine 42 contacts L-glutamate. Residues alanine 76–threonine 77, tryptophan 102, threonine 152, aspartate 172, and glutamine 195 contribute to the pyridoxal 5'-phosphate site. Lysine 196 is subject to N6-(pyridoxal phosphate)lysine. Asparagine 237–threonine 238 contacts pyridoxal 5'-phosphate.

The protein belongs to the class-V pyridoxal-phosphate-dependent aminotransferase family. SerC subfamily. As to quaternary structure, homodimer. The cofactor is pyridoxal 5'-phosphate.

It localises to the cytoplasm. The catalysed reaction is O-phospho-L-serine + 2-oxoglutarate = 3-phosphooxypyruvate + L-glutamate. It catalyses the reaction 4-(phosphooxy)-L-threonine + 2-oxoglutarate = (R)-3-hydroxy-2-oxo-4-phosphooxybutanoate + L-glutamate. The protein operates within amino-acid biosynthesis; L-serine biosynthesis; L-serine from 3-phospho-D-glycerate: step 2/3. It functions in the pathway cofactor biosynthesis; pyridoxine 5'-phosphate biosynthesis; pyridoxine 5'-phosphate from D-erythrose 4-phosphate: step 3/5. Functionally, catalyzes the reversible conversion of 3-phosphohydroxypyruvate to phosphoserine and of 3-hydroxy-2-oxo-4-phosphonooxybutanoate to phosphohydroxythreonine. This chain is Phosphoserine aminotransferase, found in Xanthomonas campestris pv. campestris (strain 8004).